The following is a 452-amino-acid chain: Probable alpha-galactosidase B (452 aa).

Residues 1 to 24 form the signal peptide; it reads MLHRATTTAAAAAAAALLLCPVQA. A disulfide bridge connects residues Cys47 and Cys79. N-linked (GlcNAc...) asparagine glycans are attached at residues Asn87 and Asn138. A disulfide bridge connects residues Cys129 and Cys159. Asp157 functions as the Nucleophile in the catalytic mechanism. N-linked (GlcNAc...) asparagine glycosylation occurs at Asn184. 231–235 provides a ligand contact to substrate; it reads DWGQA. The active-site Proton donor is the Asp253. Residues Asn292, Asn391, Asn409, and Asn410 are each glycosylated (N-linked (GlcNAc...) asparagine).

It belongs to the glycosyl hydrolase 27 family.

The protein resides in the secreted. The enzyme catalyses Hydrolysis of terminal, non-reducing alpha-D-galactose residues in alpha-D-galactosides, including galactose oligosaccharides, galactomannans and galactolipids.. In terms of biological role, hydrolyzes a variety of simple alpha-D-galactoside as well as more complex molecules such as oligosaccharides and polysaccharides. The chain is Probable alpha-galactosidase B from Talaromyces emersonii (Thermophilic fungus).